Consider the following 239-residue polypeptide: 1-(5-phosphoribosyl)-5-[(5-phosphoribosylamino)methylideneamino] imidazole-4-carboxamide isomerase (239 aa).

Asp-8 acts as the Proton acceptor in catalysis. The active-site Proton donor is the Asp-129.

It belongs to the HisA/HisF family.

It localises to the cytoplasm. It carries out the reaction 1-(5-phospho-beta-D-ribosyl)-5-[(5-phospho-beta-D-ribosylamino)methylideneamino]imidazole-4-carboxamide = 5-[(5-phospho-1-deoxy-D-ribulos-1-ylimino)methylamino]-1-(5-phospho-beta-D-ribosyl)imidazole-4-carboxamide. Its pathway is amino-acid biosynthesis; L-histidine biosynthesis; L-histidine from 5-phospho-alpha-D-ribose 1-diphosphate: step 4/9. This is 1-(5-phosphoribosyl)-5-[(5-phosphoribosylamino)methylideneamino] imidazole-4-carboxamide isomerase from Bacillus cereus (strain G9842).